The following is a 322-amino-acid chain: Ribosome biogenesis protein RLP7 (322 aa).

The segment covering 1-16 (MSSTQDSKAQTLNSNP) has biased composition (polar residues). A disordered region spans residues 1-52 (MSSTQDSKAQTLNSNPEILLRKRRNADRTRIERQELAKKKREEQIKKKRSNK). Serine 2 is modified (N-acetylserine). A Phosphoserine modification is found at serine 14. The span at 26 to 45 (ADRTRIERQELAKKKREEQI) shows a compositional bias: basic and acidic residues. Position 120 is a phosphothreonine (threonine 120). Phosphoserine is present on serine 278.

The protein belongs to the universal ribosomal protein uL30 family.

It localises to the nucleus. Its subcellular location is the nucleolus. Functionally, involved in the biogenesis of the 60S ribosomal subunit. May act as a specificity factor that binds precursor rRNAs and tethers the enzymes that carry out the early 5' to 3' exonucleolytic reactions that generate the mature rRNAs. The polypeptide is Ribosome biogenesis protein RLP7 (RLP7) (Saccharomyces cerevisiae (strain ATCC 204508 / S288c) (Baker's yeast)).